The following is a 241-amino-acid chain: DNA-binding dual master transcriptional regulator RpaA (241 aa).

In terms of domain architecture, Response regulatory spans R3 to L119. Residue D52 is modified to 4-aspartylphosphate. Positions S132–L231 form a DNA-binding region, ompR/PhoB-type.

As to quaternary structure, interacts with reduced ferredoxin (petF). Interacts with CikA, RpaB, SasA, Sll0038 (pixG) and a number of other proteins. In terms of processing, phosphorylated by SasA; phosphorylation is maximal when KaiC phosphorylation is active during the circadian cycle. Dephosphorylated by CikA. CikA and SasA cooperation generates RpaA activity oscillation that is distinct from that generated by CikA or SasA alone and offset from the rhythm of KaiC phosphorylation.

It localises to the cytoplasm. Its function is as follows. Response regulator of 2 two-component regulatory systems SasA/RpaA and CikA/RpaA involved in genome-wide circadian gene expression. The histidine kinases have opposing effects modulated by the clock oscillator proteins; SasA phosphorylates RpaA (stimulated by fully phosphorylated KaiC1) while CikA dephosphorylates phospho-RpaA (stimulated by the phospho-Ser-432-KaiC1-KaiB complex). Functionally, the RpaA regulon is about 300 genes, and includes itself, cikA, sigE, sigG, genes involved in photosynthesis, carbon metabolism in the light and dark, phototaxis, CRISPR arrays 2 and 3 as well as nearly 90 ncRNAs. Genes are up- or down-regulated in its absence. Involved in regulation of primary sugar and amino acid metabolism and in adaptation to light changes. Regulates the accumulation of the monomeric photosystem I and the D1 protein under high light conditions. Overexpression causes cells to grow more slowly, increases levels of transcripts for clock oscillator genes in the light and the dark, increases levels of SigE protein, increases accumulation of sugar catabolic enzymes in the dark with concomitant decreases in most sugar metabolites. Plays a role in cell division; overexpression from the psbAII promoter increases expression of some cell-division-related genes, alters cell volume and changes the outer cell membrane and cell wall appearance. This Synechocystis sp. (strain ATCC 27184 / PCC 6803 / Kazusa) protein is DNA-binding dual master transcriptional regulator RpaA.